The sequence spans 254 residues: uncharacterized protein (254 aa).

Residues valine 7 and asparagine 85 each coordinate NADP(+). The Proton donor role is filled by serine 136. Residues tyrosine 150, lysine 154, valine 181, and threonine 183 each coordinate NADP(+). Residue tyrosine 150 is the Proton acceptor of the active site. Lysine 154 serves as the catalytic Lowers pKa of active site Tyr.

It belongs to the short-chain dehydrogenases/reductases (SDR) family.

This is an uncharacterized protein from Saccharomyces cerevisiae (strain ATCC 204508 / S288c) (Baker's yeast).